The chain runs to 279 residues: Tryptophan 2,3-dioxygenase (279 aa).

Residues 48 to 52 (FIIQH), tyrosine 110, and arginine 114 contribute to the substrate site. Residue histidine 237 coordinates heme. Residue threonine 251 participates in substrate binding.

This sequence belongs to the tryptophan 2,3-dioxygenase family. As to quaternary structure, homotetramer. Heme serves as cofactor.

The enzyme catalyses L-tryptophan + O2 = N-formyl-L-kynurenine. It participates in amino-acid degradation; L-tryptophan degradation via kynurenine pathway; L-kynurenine from L-tryptophan: step 1/2. In terms of biological role, heme-dependent dioxygenase that catalyzes the oxidative cleavage of the L-tryptophan (L-Trp) pyrrole ring and converts L-tryptophan to N-formyl-L-kynurenine. Catalyzes the oxidative cleavage of the indole moiety. The protein is Tryptophan 2,3-dioxygenase of Bradyrhizobium diazoefficiens (strain JCM 10833 / BCRC 13528 / IAM 13628 / NBRC 14792 / USDA 110).